The sequence spans 104 residues: Photosystem II reaction center Psb28 protein (104 aa).

It belongs to the Psb28 family. Part of the photosystem II complex.

It localises to the cellular thylakoid membrane. The sequence is that of Photosystem II reaction center Psb28 protein from Synechococcus sp. (strain JA-2-3B'a(2-13)) (Cyanobacteria bacterium Yellowstone B-Prime).